The following is an 810-amino-acid chain: Janus kinase and microtubule-interacting protein 2 (810 aa).

Coiled coils occupy residues 13–102 (EALI…EMSR), 148–178 (ERLKLLQEIADLKTAKKQVDEALSNMIQADK), and 207–244 (RRLMDEIKAKDRIIFSLEKELETQTGYVQKLQLQKEAL). Basic and acidic residues predominate over residues 261 to 274 (PKREIPGRAGDGSE). Disordered stretches follow at residues 261–280 (PKREIPGRAGDGSEHCSSPD) and 437–465 (YDEDSMDSETSSMASFRTDRTPATPDDDL). Residues 280–419 (DLRRNQKRIA…REKLIRRRKH (140 aa)) adopt a coiled-coil conformation. 2 coiled-coil regions span residues 468 to 597 (SLAA…RERR) and 664 to 808 (EKWI…SNRK).

It belongs to the JAKMIP family. As to expression, highly expressed in brain, moderately expressed in thymus, spleen and lung, and weakly expressed in kidney, liver and peripheral blood lymphocytes. Also expressed in adrenal and pituitary glands, as well as testis.

The protein resides in the golgi apparatus. This Homo sapiens (Human) protein is Janus kinase and microtubule-interacting protein 2 (JAKMIP2).